A 433-amino-acid chain; its full sequence is Ascus wall endo-1,3-alpha-glucanase (433 aa).

Belongs to the glycosyl hydrolase 71 family.

It localises to the ascus epiplasm. It carries out the reaction Endohydrolysis of (1-&gt;3)-alpha-D-glucosidic linkages in isolichenin, pseudonigeran and nigeran.. Promotes the release of ascospores from asci by hydrolyzing 1,3-alpha-glucan in the ascus wall. The chain is Ascus wall endo-1,3-alpha-glucanase from Schizosaccharomyces pombe (strain 972 / ATCC 24843) (Fission yeast).